We begin with the raw amino-acid sequence, 98 residues long: Prolactin-releasing peptide (98 aa).

The N-terminal stretch at 1 to 22 is a signal peptide; it reads MKAVGAWLLCLLLLGLALQGAA. A Phenylalanine amide modification is found at Phe-53. Positions 58–98 are excised as a propeptide; the sequence is AAPGDGPRPGPRRELACIPLEGGAEPSRALLGRLTAQLVQE.

In terms of tissue distribution, more abundantly expressed in the brainstem than the hypothalamus.

It is found in the secreted. In terms of biological role, stimulates prolactin (PRL) release and regulates the expression of prolactin through its receptor GPR10. May stimulate lactotrophs directly to secrete PRL. The protein is Prolactin-releasing peptide (PRLH) of Ovis aries (Sheep).